A 601-amino-acid chain; its full sequence is Translation initiation factor IF-2 (601 aa).

Positions 54–101 (GHTASAEPAPAQASGSPASPAQTEAQEAPQPTATATAEREPAAPPARE) are disordered. Residues 57 to 89 (ASAEPAPAQASGSPASPAQTEAQEAPQPTATAT) are compositionally biased toward low complexity. In terms of domain architecture, tr-type G spans 104-273 (HRAPVVTIMG…SLTAELEDLR (170 aa)). The G1 stretch occupies residues 113–120 (GHVDHGKT). 113 to 120 (GHVDHGKT) is a binding site for GTP. A G2 region spans residues 138-142 (GITQH). The tract at residues 159-162 (DTPG) is G3. GTP contacts are provided by residues 159-163 (DTPGH) and 213-216 (NKVD). The G4 stretch occupies residues 213-216 (NKVD). Residues 249–251 (SAK) form a G5 region.

It belongs to the TRAFAC class translation factor GTPase superfamily. Classic translation factor GTPase family. IF-2 subfamily.

It is found in the cytoplasm. Functionally, one of the essential components for the initiation of protein synthesis. Protects formylmethionyl-tRNA from spontaneous hydrolysis and promotes its binding to the 30S ribosomal subunits. Also involved in the hydrolysis of GTP during the formation of the 70S ribosomal complex. This Deinococcus geothermalis (strain DSM 11300 / CIP 105573 / AG-3a) protein is Translation initiation factor IF-2.